The sequence spans 429 residues: Glutamate-1-semialdehyde 2,1-aminomutase (429 aa).

An N6-(pyridoxal phosphate)lysine modification is found at lysine 265.

The protein belongs to the class-III pyridoxal-phosphate-dependent aminotransferase family. HemL subfamily. In terms of assembly, homodimer. It depends on pyridoxal 5'-phosphate as a cofactor.

It localises to the cytoplasm. It carries out the reaction (S)-4-amino-5-oxopentanoate = 5-aminolevulinate. It functions in the pathway porphyrin-containing compound metabolism; protoporphyrin-IX biosynthesis; 5-aminolevulinate from L-glutamyl-tRNA(Glu): step 2/2. The sequence is that of Glutamate-1-semialdehyde 2,1-aminomutase from Legionella pneumophila (strain Corby).